We begin with the raw amino-acid sequence, 510 residues long: Bifunctional purine biosynthesis protein PurH (510 aa).

The MGS-like domain occupies 1 to 142 (MRALISVSDK…KNFKDVLIVT (142 aa)).

This sequence belongs to the PurH family.

It catalyses the reaction (6R)-10-formyltetrahydrofolate + 5-amino-1-(5-phospho-beta-D-ribosyl)imidazole-4-carboxamide = 5-formamido-1-(5-phospho-D-ribosyl)imidazole-4-carboxamide + (6S)-5,6,7,8-tetrahydrofolate. It carries out the reaction IMP + H2O = 5-formamido-1-(5-phospho-D-ribosyl)imidazole-4-carboxamide. It participates in purine metabolism; IMP biosynthesis via de novo pathway; 5-formamido-1-(5-phospho-D-ribosyl)imidazole-4-carboxamide from 5-amino-1-(5-phospho-D-ribosyl)imidazole-4-carboxamide (10-formyl THF route): step 1/1. The protein operates within purine metabolism; IMP biosynthesis via de novo pathway; IMP from 5-formamido-1-(5-phospho-D-ribosyl)imidazole-4-carboxamide: step 1/1. This Campylobacter curvus (strain 525.92) protein is Bifunctional purine biosynthesis protein PurH.